Consider the following 591-residue polypeptide: V-type ATP synthase alpha chain (591 aa).

Gly233–Thr240 contributes to the ATP binding site.

This sequence belongs to the ATPase alpha/beta chains family.

It carries out the reaction ATP + H2O + 4 H(+)(in) = ADP + phosphate + 5 H(+)(out). Functionally, produces ATP from ADP in the presence of a proton gradient across the membrane. The V-type alpha chain is a catalytic subunit. This chain is V-type ATP synthase alpha chain, found in Streptococcus pyogenes serotype M3 (strain ATCC BAA-595 / MGAS315).